The sequence spans 122 residues: Beta-2-microglobulin (122 aa).

The signal sequence occupies residues 1 to 22 (MMARIFILALLGQLCFLPYLDA). An Ig-like C1-type domain is found at 27–115 (PKVQVYSRHP…HLTLQEPKVV (89 aa)). Cys-47 and Cys-102 are joined by a disulfide.

The protein belongs to the beta-2-microglobulin family. As to quaternary structure, heterodimer of an alpha chain and a beta chain. Beta-2-microglobulin is the beta-chain of major histocompatibility complex class I molecules.

It is found in the secreted. In terms of biological role, component of the class I major histocompatibility complex (MHC). Involved in the presentation of peptide antigens to the immune system. The sequence is that of Beta-2-microglobulin (B2M) from Trichosurus vulpecula (Brush-tailed possum).